The sequence spans 253 residues: Tabinhibitin 3 (253 aa).

An N-terminal signal peptide occupies residues 1-22 (MTLKRIFCAALALIVLQSVASA). The region spanning 66–209 (LQKTNWLRGV…LKRALFTCNF (144 aa)) is the SCP domain. A Cell attachment site motif is present at residues 222–224 (RGD).

It belongs to the CRISP family. Expressed in salivary glands.

It is found in the secreted. Functionally, inhibits platelet aggregation induced by all agonists tested (ADP, arachidonic acid, the thromboxane A2 analog U46619, thrombin, and snake venom snaclecs (TMVA that activates platelet through GPIB, and stejnulxin that specifically acts through GPVI (GP6))). May act by competing with fibrinogen for binding to glycoprotein IIb/IIIa (ITGA2B/ITGB3). In Tabanus yao (Horsefly), this protein is Tabinhibitin 3.